Reading from the N-terminus, the 111-residue chain is U-scoloptoxin(16)-Er8a (111 aa).

The N-terminal stretch at Met-1 to Gly-26 is a signal peptide.

The protein belongs to the scoloptoxin-16 family. In terms of processing, contains 4 disulfide bonds. In terms of tissue distribution, expressed by the venom gland.

It is found in the secreted. This is U-scoloptoxin(16)-Er8a from Ethmostigmus rubripes (Giant centipede).